A 374-amino-acid chain; its full sequence is Ferroptosis suppressor protein 1 (374 aa).

Residue Gly-2 is the site of N-myristoyl glycine attachment. A helical membrane pass occupies residues 13–35 (VVIVGGGFAGIAAASQLKSFGIP). 6-hydroxy-FAD contacts are provided by residues 17–21 (GGGFA), Arg-53, and Val-81. Lys-167 bears the N6-acetyllysine mark. Position 285 (Asp-285) interacts with 6-hydroxy-FAD.

This sequence belongs to the FAD-dependent oxidoreductase family. The cofactor is 6-hydroxy-FAD. N-myristoylation at Gly-2 mediates the recruitment to lipid droplets and plasma membrane. Post-translationally, acetylation at Lys-167 prevents AIFM2 ubiquitination and degradation, thereby inhibiting ferroptosis. KAT2B mediates acetylation at Lys-167, while HDAC3 removes it. In terms of processing, ubiquitinated. AIFM2 undergoes 'Lys-29'-ubiquitination and proteasomal degradation, which is inhibited by acetylation at Lys-167.

The protein localises to the lipid droplet. It is found in the cell membrane. The protein resides in the cytoplasm. Its subcellular location is the mitochondrion membrane. It localises to the nucleus. It catalyses the reaction ubiquinone-10 + NADH + H(+) = ubiquinol-10 + NAD(+). The catalysed reaction is phylloquinone + NADH + H(+) = phylloquinol + NAD(+). It carries out the reaction menaquinone-4 + NADH + H(+) = menaquinol-4 + NAD(+). The enzyme catalyses menadione + NADH + H(+) = menadiol + NAD(+). The modification by 4-hydroxy-2-nonenal (HNE) adduction in mitochondria results in loss of the oxidoreductase activity and activation of a novel function in mitochondrial oxidative stress signaling. Functionally, a NAD(P)H-dependent oxidoreductase that acts as a key inhibitor of ferroptosis. At the plasma membrane, catalyzes reduction of coenzyme Q/ubiquinone-10 to ubiquinol-10, a lipophilic radical-trapping antioxidant that prevents lipid oxidative damage and consequently ferroptosis. Acts in parallel to GPX4 to suppress phospholipid peroxidation and ferroptosis. This anti-ferroptotic function is independent of cellular glutathione levels. Also acts as a potent radical-trapping antioxidant by mediating warfarin-resistant vitamin K reduction in the canonical vitamin K cycle: catalyzes NAD(P)H-dependent reduction of vitamin K (phylloquinone, menaquinone-4 and menadione) to hydroquinone forms. Hydroquinones act as potent radical-trapping antioxidants inhibitor of phospholipid peroxidation and ferroptosis. May play a role in mitochondrial stress signaling. Upon oxidative stress, associates with the lipid peroxidation end product 4-hydroxy-2-nonenal (HNE) forming a lipid adduct devoid of oxidoreductase activity, which then translocates from mitochondria into the nucleus triggering DNA damage and cell death. The polypeptide is Ferroptosis suppressor protein 1 (aifm2) (Xenopus laevis (African clawed frog)).